The primary structure comprises 483 residues: Glutamyl-tRNA(Gln) amidotransferase subunit A (483 aa).

Residues K77 and S152 each act as charge relay system in the active site. S176 (acyl-ester intermediate) is an active-site residue.

This sequence belongs to the amidase family. GatA subfamily. Heterotrimer of A, B and C subunits.

The catalysed reaction is L-glutamyl-tRNA(Gln) + L-glutamine + ATP + H2O = L-glutaminyl-tRNA(Gln) + L-glutamate + ADP + phosphate + H(+). In terms of biological role, allows the formation of correctly charged Gln-tRNA(Gln) through the transamidation of misacylated Glu-tRNA(Gln) in organisms which lack glutaminyl-tRNA synthetase. The reaction takes place in the presence of glutamine and ATP through an activated gamma-phospho-Glu-tRNA(Gln). This chain is Glutamyl-tRNA(Gln) amidotransferase subunit A, found in Listeria monocytogenes serotype 4b (strain F2365).